Consider the following 291-residue polypeptide: MASLKDMRVRIASTKATQKITKAMQMVAASKLRRAQMAAEAARPYAEKMDSVISNIAGAAAGSPGAPVLLAGTGKDQVHLLLVCTGERGLSGAFNSSIVRLARERAYALMNQGKEVKFFCVGRKGYEQLRRTFDKQIIENLELRSVRQLGFVNAEDIAKKVIARFNAGEFDVCTLFYSRFKSVISQIPTAQQLIPLVVEAPAAGSVATSYEYEPEEDEILSTLLPRNLAVQIFRALLENNASFYGAQMSAMDNATRNAGDMIRKQTLIYNRTRQAMITKELIEIISGAEAI.

It belongs to the ATPase gamma chain family. In terms of assembly, F-type ATPases have 2 components, CF(1) - the catalytic core - and CF(0) - the membrane proton channel. CF(1) has five subunits: alpha(3), beta(3), gamma(1), delta(1), epsilon(1). CF(0) has three main subunits: a, b and c.

The protein resides in the cell inner membrane. In terms of biological role, produces ATP from ADP in the presence of a proton gradient across the membrane. The gamma chain is believed to be important in regulating ATPase activity and the flow of protons through the CF(0) complex. The polypeptide is ATP synthase gamma chain (Rhodopseudomonas palustris (strain HaA2)).